A 373-amino-acid chain; its full sequence is Dual-specificity RNA methyltransferase RlmN (373 aa).

Glutamate 94 serves as the catalytic Proton acceptor. A Radical SAM core domain is found at 100 to 339; the sequence is DGDRATLCVS…VTVRKTRGDD (240 aa). A disulfide bridge links cysteine 107 with cysteine 344. The [4Fe-4S] cluster site is built by cysteine 114, cysteine 118, and cysteine 121. S-adenosyl-L-methionine-binding positions include 168 to 169, serine 200, 222 to 224, and asparagine 301; these read GE and SLH. The active-site S-methylcysteine intermediate is cysteine 344.

Belongs to the radical SAM superfamily. RlmN family. [4Fe-4S] cluster serves as cofactor.

The protein localises to the cytoplasm. It carries out the reaction adenosine(2503) in 23S rRNA + 2 reduced [2Fe-2S]-[ferredoxin] + 2 S-adenosyl-L-methionine = 2-methyladenosine(2503) in 23S rRNA + 5'-deoxyadenosine + L-methionine + 2 oxidized [2Fe-2S]-[ferredoxin] + S-adenosyl-L-homocysteine. It catalyses the reaction adenosine(37) in tRNA + 2 reduced [2Fe-2S]-[ferredoxin] + 2 S-adenosyl-L-methionine = 2-methyladenosine(37) in tRNA + 5'-deoxyadenosine + L-methionine + 2 oxidized [2Fe-2S]-[ferredoxin] + S-adenosyl-L-homocysteine. In terms of biological role, specifically methylates position 2 of adenine 2503 in 23S rRNA and position 2 of adenine 37 in tRNAs. m2A2503 modification seems to play a crucial role in the proofreading step occurring at the peptidyl transferase center and thus would serve to optimize ribosomal fidelity. This chain is Dual-specificity RNA methyltransferase RlmN, found in Photobacterium profundum (strain SS9).